A 415-amino-acid chain; its full sequence is Serine hydroxymethyltransferase (415 aa).

(6S)-5,6,7,8-tetrahydrofolate-binding positions include leucine 121 and 125–127 (GHL). Lysine 230 bears the N6-(pyridoxal phosphate)lysine mark.

The protein belongs to the SHMT family. As to quaternary structure, homodimer. The cofactor is pyridoxal 5'-phosphate.

The protein localises to the cytoplasm. The catalysed reaction is (6R)-5,10-methylene-5,6,7,8-tetrahydrofolate + glycine + H2O = (6S)-5,6,7,8-tetrahydrofolate + L-serine. The protein operates within one-carbon metabolism; tetrahydrofolate interconversion. It functions in the pathway amino-acid biosynthesis; glycine biosynthesis; glycine from L-serine: step 1/1. Catalyzes the reversible interconversion of serine and glycine with tetrahydrofolate (THF) serving as the one-carbon carrier. This reaction serves as the major source of one-carbon groups required for the biosynthesis of purines, thymidylate, methionine, and other important biomolecules. Also exhibits THF-independent aldolase activity toward beta-hydroxyamino acids, producing glycine and aldehydes, via a retro-aldol mechanism. In Syntrophomonas wolfei subsp. wolfei (strain DSM 2245B / Goettingen), this protein is Serine hydroxymethyltransferase.